A 27-amino-acid polypeptide reads, in one-letter code: Voltage-dependent anion-selective channel protein (27 aa).

It belongs to the eukaryotic mitochondrial porin family. In terms of assembly, interacts with hexokinases. Photoreceptors.

The protein resides in the mitochondrion outer membrane. Its function is as follows. Forms a channel through the cell membrane that allows diffusion of small hydrophilic molecules. The sequence is that of Voltage-dependent anion-selective channel protein from Doryteuthis pealeii (Longfin inshore squid).